The sequence spans 456 residues: Ribosomal RNA small subunit methyltransferase F (456 aa).

S-adenosyl-L-methionine contacts are provided by residues 109–115 (AAAPGGK), glutamate 133, arginine 138, and aspartate 177. The active-site Nucleophile is the cysteine 230.

This sequence belongs to the class I-like SAM-binding methyltransferase superfamily. RsmB/NOP family.

The protein resides in the cytoplasm. The catalysed reaction is cytidine(1400) in 16S rRNA + S-adenosyl-L-methionine = 5-methylcytidine(1400) in 16S rRNA + S-adenosyl-L-homocysteine + H(+). The enzyme catalyses cytidine(1404) in 16S rRNA + S-adenosyl-L-methionine = 5-methylcytidine(1404) in 16S rRNA + S-adenosyl-L-homocysteine + H(+). It carries out the reaction cytidine(1407) in 16S rRNA + S-adenosyl-L-methionine = 5-methylcytidine(1407) in 16S rRNA + S-adenosyl-L-homocysteine + H(+). Specifically methylates the cytosines at positions 1400 (m5C1400), 1404 (m5C1404) and 1407 (m5C1407) of 16S rRNA. C1400, C1404 and C1407 are methylated in a 30S subunit substrate, but only C1400 and C1404 are methylated when naked 16S rRNA is the substrate. Methylation by RsmF may facilitate growth at temperatures outside the optimal growth temperature. This Thermus thermophilus (strain ATCC 27634 / DSM 579 / HB8) protein is Ribosomal RNA small subunit methyltransferase F.